Here is a 115-residue protein sequence, read N- to C-terminus: Protein Wnt-2 (115 aa).

S1 carries the O-palmitoleoyl serine; by PORCN lipid modification. C81 and C96 are oxidised to a cystine. N82 carries N-linked (GlcNAc...) asparagine glycosylation.

The protein belongs to the Wnt family. Palmitoleoylation is required for efficient binding to frizzled receptors. Depalmitoleoylation leads to Wnt signaling pathway inhibition.

Its subcellular location is the secreted. The protein localises to the extracellular space. It is found in the extracellular matrix. Its function is as follows. Ligand for members of the frizzled family of seven transmembrane receptors. Probable developmental protein. May be a signaling molecule which affects the development of discrete regions of tissues. Is likely to signal over only few cell diameters. The chain is Protein Wnt-2 (WNT-2) from Strongylocentrotus purpuratus (Purple sea urchin).